The sequence spans 161 residues: MDQEAVGNVVLLAIVTLISVVQNAFFAHKVELESKAQSGRSFQRTGTLAFERVYTANQNCVDAYPTFLVVLWTAGLLCSQVPAAFAGLMYLFVRQKYFVGYLGERTQSTPGYIFGKRIILFLFLMSLAGILNHYLIFFFGSDFENYIRTITTTISPLLLIP.

Residues 1–8 are Lumenal-facing; sequence MDQEAVGN. A helical membrane pass occupies residues 9–30; the sequence is VVLLAIVTLISVVQNAFFAHKV. The Cytoplasmic portion of the chain corresponds to 31-52; sequence ELESKAQSGRSFQRTGTLAFER. A helical membrane pass occupies residues 53–77; the sequence is VYTANQNCVDAYPTFLVVLWTAGLL. Residues 78–80 are Lumenal-facing; sequence CSQ. A helical transmembrane segment spans residues 81–102; the sequence is VPAAFAGLMYLFVRQKYFVGYL. Over 103-107 the chain is Cytoplasmic; that stretch reads GERTQ. The stretch at 108-115 is an intramembrane region; the sequence is STPGYIFG. A helical transmembrane segment spans residues 116–128; it reads KRIILFLFLMSLA. The Lumenal portion of the chain corresponds to 129–161; the sequence is GILNHYLIFFFGSDFENYIRTITTTISPLLLIP.

Belongs to the MAPEG family. Homotrimer. Interacts with LTC4S and ALOX5.

Its subcellular location is the nucleus membrane. The protein resides in the endoplasmic reticulum membrane. Its function is as follows. Required for leukotriene biosynthesis by ALOX5 (5-lipoxygenase). Anchors ALOX5 to the membrane. Binds arachidonic acid, and could play an essential role in the transfer of arachidonic acid to ALOX5. Binds to MK-886, a compound that blocks the biosynthesis of leukotrienes. In Rattus norvegicus (Rat), this protein is Arachidonate 5-lipoxygenase-activating protein (Alox5ap).